The sequence spans 364 residues: DNA replication and repair protein RecF (364 aa).

Residue 30–37 (GNNGQGKT) coordinates ATP.

Belongs to the RecF family.

The protein localises to the cytoplasm. Functionally, the RecF protein is involved in DNA metabolism; it is required for DNA replication and normal SOS inducibility. RecF binds preferentially to single-stranded, linear DNA. It also seems to bind ATP. The chain is DNA replication and repair protein RecF from Geobacter sp. (strain M21).